The following is a 195-amino-acid chain: Pyruvoyl-dependent arginine decarboxylase AaxB (195 aa).

Pyruvic acid (Ser) is present on serine 53.

The protein belongs to the pyruvoyl-dependent arginine decarboxylase family. In terms of assembly, trimer of an alpha-beta dimer. The cofactor is pyruvate.

It localises to the cytoplasm. It carries out the reaction L-arginine + H(+) = agmatine + CO2. Part of the AaxABC system, catalyzes the decarboxylation of L-arginine. The arginine uptake by the bacterium in the macrophage may be a virulence factor against the host innate immune response. This is Pyruvoyl-dependent arginine decarboxylase AaxB (aaxB) from Chlamydia trachomatis serovar D (strain ATCC VR-885 / DSM 19411 / UW-3/Cx).